The sequence spans 72 residues: Translation initiation factor IF-1 (72 aa).

In terms of domain architecture, S1-like spans 1-72 (MAKEEAITVD…SKGRITYRKK (72 aa)).

Belongs to the IF-1 family. Component of the 30S ribosomal translation pre-initiation complex which assembles on the 30S ribosome in the order IF-2 and IF-3, IF-1 and N-formylmethionyl-tRNA(fMet); mRNA recruitment can occur at any time during PIC assembly.

The protein resides in the cytoplasm. Functionally, one of the essential components for the initiation of protein synthesis. Stabilizes the binding of IF-2 and IF-3 on the 30S subunit to which N-formylmethionyl-tRNA(fMet) subsequently binds. Helps modulate mRNA selection, yielding the 30S pre-initiation complex (PIC). Upon addition of the 50S ribosomal subunit IF-1, IF-2 and IF-3 are released leaving the mature 70S translation initiation complex. The chain is Translation initiation factor IF-1 from Leptospira borgpetersenii serovar Hardjo-bovis (strain L550).